The primary structure comprises 348 residues: MSGWSHRHILDLASFSLEDYSSVLELAHRFRSMPVTGARKLPALQGRLVATLFFEPSTRTRSSFELAARRLSADVQSFTPASSSLSKGETLLDTARTYVAMGADVLVVRHGSTSVPEQLACALDRSGERTAVLNGGDGLHSHPSQGLLDLYTLAHHFDPDHPLPEAIQGRRIVIVGDVLHSRVARSNLWALTACGADVVLCGPPSLVPQDFVAFVEAPPPGQAHDPVLHRGCVEVVRTLEEALPGADAVMTLRLQKERMHQHLLTDLNRFHRDYGLTHERLKLCGKPVPLLHPGPVNRGVELGGSLLDDHSISLVEEQVRNGIPIRMALLYLMAAFESSPDPSLEAIG.

Residues Arg59 and Thr60 each contribute to the carbamoyl phosphate site. Residue Lys87 participates in L-aspartate binding. Positions 109, 142, and 145 each coordinate carbamoyl phosphate. Residues Arg182 and Arg253 each coordinate L-aspartate. Residues Gly294 and Pro295 each coordinate carbamoyl phosphate.

The protein belongs to the aspartate/ornithine carbamoyltransferase superfamily. ATCase family. Heterododecamer (2C3:3R2) of six catalytic PyrB chains organized as two trimers (C3), and six regulatory PyrI chains organized as three dimers (R2).

The enzyme catalyses carbamoyl phosphate + L-aspartate = N-carbamoyl-L-aspartate + phosphate + H(+). It functions in the pathway pyrimidine metabolism; UMP biosynthesis via de novo pathway; (S)-dihydroorotate from bicarbonate: step 2/3. Its function is as follows. Catalyzes the condensation of carbamoyl phosphate and aspartate to form carbamoyl aspartate and inorganic phosphate, the committed step in the de novo pyrimidine nucleotide biosynthesis pathway. The protein is Aspartate carbamoyltransferase catalytic subunit of Prochlorococcus marinus (strain MIT 9313).